The sequence spans 228 residues: tRNA (guanine-N(1)-)-methyltransferase (228 aa).

S-adenosyl-L-methionine-binding positions include Gly-111 and 130 to 135; that span reads IGDFVL.

This sequence belongs to the RNA methyltransferase TrmD family. Homodimer.

The protein resides in the cytoplasm. The enzyme catalyses guanosine(37) in tRNA + S-adenosyl-L-methionine = N(1)-methylguanosine(37) in tRNA + S-adenosyl-L-homocysteine + H(+). In terms of biological role, specifically methylates guanosine-37 in various tRNAs. The chain is tRNA (guanine-N(1)-)-methyltransferase from Ureaplasma parvum serovar 3 (strain ATCC 27815 / 27 / NCTC 11736).